The sequence spans 255 residues: MRWAAATLRGKARPRGRAGVTTPAPGNRTGTCAKLRLPPQATFQVLRGNGASVGTVLMFRCPSNHQMVGSGLLTCTWKGSIAEWSSGSPVCKLVPPHETFGFKVAVIASIVSCAIILLMSMAFLTCCLLKCVKKSKRRRSNRSAQLWSQLKDEDLETVQAAYLGLKHFNKPVSGPSQAHDNHSFTTDHGESTSKLASVTRSVDKDPGIPRALSLSGSSSSPQAQVMVHMANPRQPLPASGLATGMPQQPAAYALG.

A disordered region spans residues methionine 1–proline 25. Residues methionine 1 to lysine 103 are Extracellular-facing. N-linked (GlcNAc...) asparagine glycosylation occurs at asparagine 27. Residues glycine 30–leucine 93 enclose the Sushi domain. Cystine bridges form between cysteine 32/cysteine 75 and cysteine 61/cysteine 91. The helical transmembrane segment at valine 104 to leucine 124 threads the bilayer. Residues threonine 125–glycine 255 lie on the Cytoplasmic side of the membrane. The segment at serine 173–glycine 255 is disordered. Residues histidine 179–serine 191 show a composition bias toward basic and acidic residues.

As to expression, highly expressed in estrogen receptor-positive breast tumors.

It localises to the cell membrane. In terms of biological role, may play a role in breast tumorigenesis by promoting estrogen-dependent cell proliferation, cell-cell interactions and migration. The chain is Sushi domain-containing protein 3 (SUSD3) from Homo sapiens (Human).